The primary structure comprises 418 residues: PP2A regulatory subunit TAP46 (418 aa).

The disordered stretch occupies residues 367–418; that stretch reads KMIQESNSAWHKDGSRSAQEDEDAEEEKARAWDDWKDDNPRGAGNKKLTPCG. Basic and acidic residues-rich tracts occupy residues 376-385 and 393-406; these read WHKDGSRSAQ and EKARAWDDWKDDNP.

This sequence belongs to the IGBP1/TAP42 family.

Involved in the regulation of the TOR signaling pathway. Seems to act as a regulator of PP2A catalytic activity. The protein is PP2A regulatory subunit TAP46 of Oryza sativa subsp. japonica (Rice).